The following is a 440-amino-acid chain: tRNA(Ile)-lysidine synthase (440 aa).

Residue 13 to 18 participates in ATP binding; sequence SGGADS.

It belongs to the tRNA(Ile)-lysidine synthase family.

It localises to the cytoplasm. The catalysed reaction is cytidine(34) in tRNA(Ile2) + L-lysine + ATP = lysidine(34) in tRNA(Ile2) + AMP + diphosphate + H(+). In terms of biological role, ligates lysine onto the cytidine present at position 34 of the AUA codon-specific tRNA(Ile) that contains the anticodon CAU, in an ATP-dependent manner. Cytidine is converted to lysidine, thus changing the amino acid specificity of the tRNA from methionine to isoleucine. The polypeptide is tRNA(Ile)-lysidine synthase (Solibacter usitatus (strain Ellin6076)).